We begin with the raw amino-acid sequence, 229 residues long: uncharacterized protein (229 aa).

22-29 (GMIAFGKT) contacts ATP.

This is an uncharacterized protein from Mycoplasma pneumoniae (strain ATCC 29342 / M129 / Subtype 1) (Mycoplasmoides pneumoniae).